The chain runs to 608 residues: Protein SHQ1 homolog (608 aa).

2 disordered regions span residues 487-531 and 543-608; these read DAGS…SFYS and IVYE…ASTT. Residues 489-498 show a composition bias toward low complexity; sequence GSQGSSPQQQ. Composition is skewed to acidic residues over residues 502 to 524 and 543 to 579; these read DDLD…DESV and IVYE…EDDS. Polar residues predominate over residues 588-608; sequence EAEGNSVIEQCSNSETAASTT.

Belongs to the SHQ1 family.

Required for the quantitative accumulation of H/ACA ribonucleoproteins (RNPs). The polypeptide is Protein SHQ1 homolog (Drosophila melanogaster (Fruit fly)).